A 155-amino-acid polypeptide reads, in one-letter code: Acyl-CoA-binding domain-containing protein 3 (155 aa).

In terms of domain architecture, ACB spans 3-88; it reads LQEDFEEYAE…VKQLQEEAAA (86 aa). An acyl-CoA-binding positions include Lys15, 30–34, Lys56, and Tyr75; that span reads YGLYK.

It belongs to the ACBP family. In terms of tissue distribution, highly expressed in leaves. Expressed at low levels in roots and seeds.

The protein resides in the cytoplasm. Its subcellular location is the cytosol. In terms of biological role, binds medium- and long-chain acyl-CoA esters with high affinity. Can interact in vitro with linolenoyl-CoA. Binds phosphatidic acid (PA) and phosphatidylcholine (PC) in vitro. May play a role in the biosynthesis of phospholipids. This chain is Acyl-CoA-binding domain-containing protein 3, found in Oryza sativa subsp. japonica (Rice).